Consider the following 471-residue polypeptide: Sulfate adenylyltransferase subunit 1 (471 aa).

The 217-residue stretch at Lys-24 to Glu-240 folds into the tr-type G domain. The tract at residues Gly-33–Ser-40 is G1. Gly-33–Ser-40 contributes to the GTP binding site. The tract at residues Gly-91 to Asp-95 is G2. The interval Asp-112–Gly-115 is G3. Residues Asp-112–His-116 and Asn-167–Asp-170 contribute to the GTP site. Residues Asn-167 to Asp-170 form a G4 region. The G5 stretch occupies residues Ser-204 to Leu-206.

This sequence belongs to the TRAFAC class translation factor GTPase superfamily. Classic translation factor GTPase family. CysN/NodQ subfamily. In terms of assembly, heterodimer composed of CysD, the smaller subunit, and CysN.

It carries out the reaction sulfate + ATP + H(+) = adenosine 5'-phosphosulfate + diphosphate. Its pathway is sulfur metabolism; hydrogen sulfide biosynthesis; sulfite from sulfate: step 1/3. Its function is as follows. With CysD forms the ATP sulfurylase (ATPS) that catalyzes the adenylation of sulfate producing adenosine 5'-phosphosulfate (APS) and diphosphate, the first enzymatic step in sulfur assimilation pathway. APS synthesis involves the formation of a high-energy phosphoric-sulfuric acid anhydride bond driven by GTP hydrolysis by CysN coupled to ATP hydrolysis by CysD. The polypeptide is Sulfate adenylyltransferase subunit 1 (Aeromonas salmonicida (strain A449)).